We begin with the raw amino-acid sequence, 420 residues long: Uteroferrin-associated basic protein 2 (420 aa).

The N-terminal stretch at 1 to 25 (MSHGKMPLVLSLVLILCGLFNSISC) is a signal peptide. N-linked (GlcNAc...) asparagine glycosylation is found at N225, N271, and N343.

Belongs to the serpin family. UTMP subfamily.

It is found in the secreted. The protein localises to the extracellular space. The chain is Uteroferrin-associated basic protein 2 from Sus scrofa (Pig).